Consider the following 503-residue polypeptide: Transforming protein rel polyprotein (503 aa).

The RHD domain maps to 16-305; sequence PYIEIFEQPR…GNKAKRQRST (290 aa). Ser-275 is subject to Phosphoserine; by host PKA. Disordered stretches follow at residues 286-306 and 318-342; these read RYLP…RSTL and AVTE…KEPN. The Nuclear localization signal signature appears at 298–303; that stretch reads KAKRQR.

It localises to the host cytoplasm. Functionally, this transforming protein appears to have a protein-kinase activity. The sequence is that of Transforming protein rel polyprotein (V-REL) from Galliformes.